A 264-amino-acid polypeptide reads, in one-letter code: Ribonuclease HII (264 aa).

An RNase H type-2 domain is found at 33-224 (GPVAGVDEVG…VRRVASGSNT (192 aa)). The a divalent metal cation site is built by Asp-39, Glu-40, and Asp-133. Positions 222–264 (SNTAEVADGQPDPRDGTAQTGEGRWSKSSHPATMRATGRAQGT) are disordered.

The protein belongs to the RNase HII family. The cofactor is Mn(2+). Mg(2+) serves as cofactor.

It is found in the cytoplasm. The catalysed reaction is Endonucleolytic cleavage to 5'-phosphomonoester.. Endonuclease that specifically degrades the RNA of RNA-DNA hybrids. In Mycobacterium bovis (strain BCG / Pasteur 1173P2), this protein is Ribonuclease HII.